Here is a 147-residue protein sequence, read N- to C-terminus: Hemoglobin subunit deltaH (147 aa).

A Globin domain is found at arginine 3–histidine 147. Positions 64 and 93 each coordinate heme b.

Belongs to the globin family. Heterotetramer of two delta chains and two alpha chains. Red blood cells.

The sequence is that of Hemoglobin subunit deltaH from Heterohyrax brucei (Yellow-spotted hyrax).